The following is a 200-amino-acid chain: ATP-dependent Clp protease proteolytic subunit 2 (200 aa).

The Nucleophile role is filled by Ser96. Residue His121 is part of the active site.

It belongs to the peptidase S14 family. In terms of assembly, fourteen ClpP subunits assemble into 2 heptameric rings which stack back to back to give a disk-like structure with a central cavity, resembling the structure of eukaryotic proteasomes.

It localises to the cytoplasm. The catalysed reaction is Hydrolysis of proteins to small peptides in the presence of ATP and magnesium. alpha-casein is the usual test substrate. In the absence of ATP, only oligopeptides shorter than five residues are hydrolyzed (such as succinyl-Leu-Tyr-|-NHMec, and Leu-Tyr-Leu-|-Tyr-Trp, in which cleavage of the -Tyr-|-Leu- and -Tyr-|-Trp bonds also occurs).. Functionally, cleaves peptides in various proteins in a process that requires ATP hydrolysis. Has a chymotrypsin-like activity. Plays a major role in the degradation of misfolded proteins. This is ATP-dependent Clp protease proteolytic subunit 2 from Synechococcus sp. (strain JA-2-3B'a(2-13)) (Cyanobacteria bacterium Yellowstone B-Prime).